A 155-amino-acid polypeptide reads, in one-letter code: Ribosomal RNA large subunit methyltransferase H (155 aa).

S-adenosyl-L-methionine-binding positions include Leu73, Gly104, and 123 to 128; that span reads LSPLTL.

The protein belongs to the RNA methyltransferase RlmH family. In terms of assembly, homodimer.

Its subcellular location is the cytoplasm. The enzyme catalyses pseudouridine(1915) in 23S rRNA + S-adenosyl-L-methionine = N(3)-methylpseudouridine(1915) in 23S rRNA + S-adenosyl-L-homocysteine + H(+). Functionally, specifically methylates the pseudouridine at position 1915 (m3Psi1915) in 23S rRNA. In Ectopseudomonas mendocina (strain ymp) (Pseudomonas mendocina), this protein is Ribosomal RNA large subunit methyltransferase H.